Consider the following 135-residue polypeptide: Beta-galactoside-binding lectin (135 aa).

At serine 2 the chain carries N-acetylserine. Cysteine 3 and cysteine 8 are joined by a disulfide. The 131-residue stretch at 5 to 135 (GPVCTNLGLK…DFTLRSVSWE (131 aa)) folds into the Galectin domain. Residues 46 to 50 (HFNPR), histidine 54, asparagine 63, 70 to 73 (WGTE), and 70 to 76 (WGTEQRE) each bind a beta-D-galactoside.

Homodimer; disulfide-linked. In terms of assembly, (Microbial infection) Interacts with newcastle disease virus protein HN; this interaction inhibits viral adsorption rather than internalization. In terms of tissue distribution, mainly in the intestine (adult), mainly in the skin (embryo).

Its function is as follows. This protein binds beta-galactoside. May participate in host antiviral defense through specific interaction with glycans on the viral envelope glycoproteins. The protein is Beta-galactoside-binding lectin (CG-1B) of Gallus gallus (Chicken).